We begin with the raw amino-acid sequence, 117 residues long: Fluoride-specific ion channel FluC 2 (117 aa).

2 consecutive transmembrane segments (helical) span residues 1–21 (MISI…RSAI) and 46–66 (FLIG…AFFV). Na(+) is bound by residues Gly71 and Thr74. The helical transmembrane segment at 95–115 (LFLNYSLLQFIIGFIACYIGY) threads the bilayer.

This sequence belongs to the fluoride channel Fluc/FEX (TC 1.A.43) family.

The protein localises to the cell membrane. The enzyme catalyses fluoride(in) = fluoride(out). With respect to regulation, na(+) is not transported, but it plays an essential structural role and its presence is essential for fluoride channel function. Fluoride-specific ion channel. Important for reducing fluoride concentration in the cell, thus reducing its toxicity. The protein is Fluoride-specific ion channel FluC 2 of Staphylococcus aureus (strain MRSA252).